The chain runs to 175 residues: uncharacterized protein (175 aa).

Over residues 1 to 14 (MNTSSRIQLPSSND) the composition is skewed to polar residues. Disordered stretches follow at residues 1 to 31 (MNTS…SKRS) and 127 to 175 (ARSR…QSKR). Basic and acidic residues predominate over residues 16 to 27 (HVYDGRSNEPKA). A compositionally biased stretch (low complexity) spans 130 to 149 (RASSVSNSRLNSRTNSSVSL). Positions 154-175 (GSSSWKNKIKNAVSNVTDQSKR) are enriched in polar residues.

The protein localises to the cytoplasm. It localises to the nucleus. This is an uncharacterized protein from Schizosaccharomyces pombe (strain 972 / ATCC 24843) (Fission yeast).